The following is a 108-amino-acid chain: UPF0060 membrane protein KPK_2870 (108 aa).

The next 4 membrane-spanning stretches (helical) occupy residues 6–26 (LLFFATALCEIIGCYLPWLWL), 29–49 (GATPLLLIPTGLALALFVWLL), 61–81 (AAYGGVYVCTALLWLRVVDGV), and 86–106 (YDWAGAIIALCGMLIIVAGWG).

It belongs to the UPF0060 family.

Its subcellular location is the cell inner membrane. This chain is UPF0060 membrane protein KPK_2870, found in Klebsiella pneumoniae (strain 342).